Here is a 390-residue protein sequence, read N- to C-terminus: Chorismate synthase 2 (390 aa).

Residues arginine 39 and arginine 45 each contribute to the NADP(+) site. Residues 132-134, 253-254, glycine 298, 313-317, and arginine 339 contribute to the FMN site; these read RSS, NA, and KPIPT.

The protein belongs to the chorismate synthase family. As to quaternary structure, homotetramer. FMNH2 serves as cofactor.

It catalyses the reaction 5-O-(1-carboxyvinyl)-3-phosphoshikimate = chorismate + phosphate. The protein operates within metabolic intermediate biosynthesis; chorismate biosynthesis; chorismate from D-erythrose 4-phosphate and phosphoenolpyruvate: step 7/7. Its function is as follows. Catalyzes the anti-1,4-elimination of the C-3 phosphate and the C-6 proR hydrogen from 5-enolpyruvylshikimate-3-phosphate (EPSP) to yield chorismate, which is the branch point compound that serves as the starting substrate for the three terminal pathways of aromatic amino acid biosynthesis. This reaction introduces a second double bond into the aromatic ring system. The sequence is that of Chorismate synthase 2 from Bacillus thuringiensis (strain Al Hakam).